The sequence spans 4965 residues: Auxin transport protein BIG (4965 aa).

The next 3 helical transmembrane spans lie at 289–309 (SDICCTVQVCILASLLEIFSP), 646–666 (ACLAAYVVVSGNTSVMVAYEV), and 772–792 (LFLICWSTLSGIGYSGGYEGL). Residues 1383 to 1425 (TNQESNSTVDCDASSGEEDEDDGTSDGELVSIDRDEEEDGNSE) are disordered. Positions 1397-1407 (SGEEDEDDGTS) are enriched in acidic residues. Residues 1431 to 1502 (KVCTFTSSGS…RGSSCQCLKP (72 aa)) form a UBR-type zinc finger. The segment at 2437–2456 (DDAPDNHAKASAASNSTTGN) is disordered. The segment covering 2445–2456 (KASAASNSTTGN) has biased composition (low complexity). The ZZ-type zinc-finger motif lies at 2469–2528 (SVQYCCDGCSTVPILRRRWHCNICPDFDLCETCYEILDADRLPAPHSRDHPMSAIPIELD). Zn(2+) contacts are provided by Cys-2474, Cys-2477, Cys-2489, Cys-2492, Cys-2498, Cys-2501, His-2514, and His-2518. The tract at residues 2997–3037 (NAQKTESGDIGSSTRTGSQSSDSKKKRKGDDSSEGSSEKSC) is disordered. Over residues 3007–3017 (GSSTRTGSQSS) the composition is skewed to low complexity. Positions 3024–3037 (KGDDSSEGSSEKSC) are enriched in basic and acidic residues. Residues 3319-3359 (CPRCSRSVTDKHGICSNCHENAYQCRQCRNINYENLDSFLC) form an MYND-type; degenerate zinc finger. The tract at residues 3672–3721 (PKSDSGEKEPGMGKSSLMQAKNDDTVGHSVTNLSTSKTQSELSGKIPDGS) is disordered. The segment covering 3699–3713 (HSVTNLSTSKTQSEL) has biased composition (polar residues). Residues 4433–4963 (PSIPLILSML…DFVRAIIHGA (531 aa)) are UBR4 E3 catalytic module. The HemiRING-type zinc finger occupies 4562 to 4681 (GLACMVCREG…WDQLNSLGRA (120 aa)). Residues Cys-4565, Cys-4568, His-4615, and Cys-4618 each contribute to the Zn(2+) site. Positions 4684 to 4963 (SRLRLLTYDI…DFVRAIIHGA (280 aa)) constitute a UZI domain. Low complexity predominate over residues 4753 to 4770 (SSSPSTPESPVRLSALSG). Disordered regions lie at residues 4753–4778 (SSSPSTPESPVRLSALSGARGGSGSS) and 4822–4846 (STLKLSADTSSSAVRSDEGSSADSN). A compositionally biased stretch (polar residues) spans 4824–4845 (LKLSADTSSSAVRSDEGSSADS).

The protein belongs to the UBR4 family.

The protein localises to the membrane. Its function is as follows. Required for auxin efflux and polar auxin transport (PAT) influencing auxin-mediated developmental responses (e.g. cell elongation, apical dominance, lateral root production, inflorescence architecture, general growth and development). The sequence is that of Auxin transport protein BIG from Oryza sativa subsp. japonica (Rice).